The sequence spans 786 residues: AT-rich interactive domain-containing protein 3 (786 aa).

Low complexity predominate over residues 1 to 16 (MENLTEIESTMESLTE). Disordered regions lie at residues 1-182 (MENL…HHAD), 199-251 (SGDH…IPAN), and 395-420 (DTTV…NSSA). Composition is skewed to basic and acidic residues over residues 18-64 (ESER…HEDS) and 87-97 (DLPKIDDEKNS). Low complexity predominate over residues 130–139 (ENIVSSEVSS). Composition is skewed to basic and acidic residues over residues 141–156 (ILKD…RDTA), 169–182 (KLSE…HHAD), 199–219 (SGDH…ENQS), 234–248 (AEER…HKEI), and 402–416 (NNKD…ERQD). Residues 494–585 (EEDQSAFMKE…ALLEYERHKV (92 aa)) form the ARID domain. The disordered stretch occupies residues 606-638 (QASGSGRARRDAASRAMQGWHSQRLNGNGEVSD). The sHSP domain occupies 686–786 (VTVVDVGPPA…FVRVPLEQLE (101 aa)).

This sequence belongs to the small heat shock protein (HSP20) family.

Its subcellular location is the nucleus. The sequence is that of AT-rich interactive domain-containing protein 3 (ARID3) from Arabidopsis thaliana (Mouse-ear cress).